The sequence spans 240 residues: Methylthioribulose-1-phosphate dehydratase (240 aa).

Polar residues predominate over residues 1–17; it reads MAQEVENNNNDHLVQSS. The segment at 1 to 20 is disordered; sequence MAQEVENNNNDHLVQSSDPE. Cys-100 is a binding site for substrate. Zn(2+)-binding residues include His-117 and His-119. The active-site Proton donor/acceptor is Glu-146. Position 202 (His-202) interacts with Zn(2+).

This sequence belongs to the aldolase class II family. MtnB subfamily. Zn(2+) is required as a cofactor.

Its subcellular location is the cytoplasm. The enzyme catalyses 5-(methylsulfanyl)-D-ribulose 1-phosphate = 5-methylsulfanyl-2,3-dioxopentyl phosphate + H2O. The protein operates within amino-acid biosynthesis; L-methionine biosynthesis via salvage pathway; L-methionine from S-methyl-5-thio-alpha-D-ribose 1-phosphate: step 2/6. Catalyzes the dehydration of methylthioribulose-1-phosphate (MTRu-1-P) into 2,3-diketo-5-methylthiopentyl-1-phosphate (DK-MTP-1-P). This is Methylthioribulose-1-phosphate dehydratase from Neosartorya fischeri (strain ATCC 1020 / DSM 3700 / CBS 544.65 / FGSC A1164 / JCM 1740 / NRRL 181 / WB 181) (Aspergillus fischerianus).